Here is a 282-residue protein sequence, read N- to C-terminus: Pantothenate synthetase (282 aa).

ATP is bound at residue 30 to 37; the sequence is MGYLHEGH. The active-site Proton donor is the His-37. Gln-61 contacts (R)-pantoate. Residue Gln-61 coordinates beta-alanine. ATP is bound at residue 147–150; that stretch reads GMKD. Gln-153 provides a ligand contact to (R)-pantoate. ATP contacts are provided by residues Val-176 and 184-187; that span reads KSSR.

This sequence belongs to the pantothenate synthetase family. In terms of assembly, homodimer.

Its subcellular location is the cytoplasm. The enzyme catalyses (R)-pantoate + beta-alanine + ATP = (R)-pantothenate + AMP + diphosphate + H(+). It participates in cofactor biosynthesis; (R)-pantothenate biosynthesis; (R)-pantothenate from (R)-pantoate and beta-alanine: step 1/1. Its function is as follows. Catalyzes the condensation of pantoate with beta-alanine in an ATP-dependent reaction via a pantoyl-adenylate intermediate. In Bacillus thuringiensis (strain Al Hakam), this protein is Pantothenate synthetase.